Here is a 448-residue protein sequence, read N- to C-terminus: Phosphoglucosamine mutase (448 aa).

Ser-100 acts as the Phosphoserine intermediate in catalysis. Positions 100, 240, 242, and 244 each coordinate Mg(2+). Position 100 is a phosphoserine (Ser-100).

The protein belongs to the phosphohexose mutase family. Mg(2+) is required as a cofactor. Post-translationally, activated by phosphorylation.

It catalyses the reaction alpha-D-glucosamine 1-phosphate = D-glucosamine 6-phosphate. In terms of biological role, catalyzes the conversion of glucosamine-6-phosphate to glucosamine-1-phosphate. In Bacillus cereus (strain B4264), this protein is Phosphoglucosamine mutase.